A 516-amino-acid polypeptide reads, in one-letter code: 3-phosphoshikimate 1-carboxyvinyltransferase, chloroplastic (516 aa).

The N-terminal 72 residues, Met-1–Gln-72, are a transit peptide targeting the chloroplast. Residues Lys-95, Ser-96, and Arg-100 each coordinate 3-phosphoshikimate. Lys-95 contributes to the phosphoenolpyruvate binding site. Phosphoenolpyruvate-binding residues include Gly-173 and Arg-203. 3-phosphoshikimate contacts are provided by Ser-250, Ser-251, Gln-252, Ser-278, Asp-403, and Lys-430. Gln-252 contacts phosphoenolpyruvate. The Proton acceptor role is filled by Asp-403. 3 residues coordinate phosphoenolpyruvate: Arg-434, Arg-476, and Lys-501.

It belongs to the EPSP synthase family. Mostly expressed in flower petals, and, to a lower extent, in roots, stems and anthers, but barely in leaves.

Its subcellular location is the plastid. The protein localises to the chloroplast. The enzyme catalyses 3-phosphoshikimate + phosphoenolpyruvate = 5-O-(1-carboxyvinyl)-3-phosphoshikimate + phosphate. The protein operates within metabolic intermediate biosynthesis; chorismate biosynthesis; chorismate from D-erythrose 4-phosphate and phosphoenolpyruvate: step 6/7. With respect to regulation, competitively inhibited by glyphosate. In terms of biological role, catalyzes the transfer of the enolpyruvyl moiety of phosphoenolpyruvate (PEP) to the 5-hydroxyl of shikimate-3-phosphate (S3P) to produce enolpyruvyl shikimate-3-phosphate and inorganic phosphate. Involved in the accumulation of volatile benzoides in flowers, scent attracting pollinators (e.g. the night-active hawkmoth pollinator Manduca sexta). This chain is 3-phosphoshikimate 1-carboxyvinyltransferase, chloroplastic, found in Petunia hybrida (Petunia).